Consider the following 67-residue polypeptide: Large ribosomal subunit protein bL35 (67 aa).

Belongs to the bacterial ribosomal protein bL35 family.

This chain is Large ribosomal subunit protein bL35, found in Paramagnetospirillum magneticum (strain ATCC 700264 / AMB-1) (Magnetospirillum magneticum).